We begin with the raw amino-acid sequence, 154 residues long: Large ribosomal subunit protein uL23z (154 aa).

Belongs to the universal ribosomal protein uL23 family.

In terms of biological role, binds to a specific region on the 26S rRNA. This chain is Large ribosomal subunit protein uL23z (RPL23AA), found in Arabidopsis thaliana (Mouse-ear cress).